The primary structure comprises 447 residues: Zinc finger protein ZIC 1 (447 aa).

The segment at 225–260 (LICKWIEPEQLANPKKSCNKTFSTMHELVTHVTVEH) adopts a C2H2-type 1; atypical zinc-finger fold. The segment at 269–296 (HICFWEECPREGKPFKAKYKLVNHIRVH) adopts a C2H2-type 2; atypical zinc-finger fold. 3 consecutive C2H2-type zinc fingers follow at residues 302–326 (FPCPFPGCGKVFARSENLKIHKRTH), 332–356 (FKCEFEGCDRRFANSSDRKKHMHVH), and 362–384 (YLCKMCDKSYTHPSSLRKHMKVH). The disordered stretch occupies residues 375–431 (SSLRKHMKVHESSSQGSQPSPAASSGYESSTPPTIVSPSTDNPTTSSLSPSSSAVHH). The span at 386-427 (SSSQGSQPSPAASSGYESSTPPTIVSPSTDNPTTSSLSPSSS) shows a compositional bias: low complexity.

This sequence belongs to the GLI C2H2-type zinc-finger protein family. As to quaternary structure, interacts (via the C2H2-type domains 3, 4 and 5) with MDFIC (via the C2H2-type domains 3, 4 and 5). Interacts with GLI1; the interaction enhances transcription activation. Interacts with GLI2. Interacts with GLI3; the interaction enhances transcription activation. In terms of tissue distribution, CNS. A high level expression is seen in the cerebellum. Detected in the nuclei of the cerebellar granule cell lineage from the progenitor cells of the external germinal layer to the postmigrated cells of the internal granular layer. Detected in medulloblastoma (26/29 cases), but not present in all other tumors examined.

It localises to the nucleus. The protein resides in the cytoplasm. In terms of biological role, acts as a transcriptional activator. Involved in neurogenesis. Plays important roles in the early stage of organogenesis of the CNS, as well as during dorsal spinal cord development and maturation of the cerebellum. Involved in the spatial distribution of mossy fiber (MF) neurons within the pontine gray nucleus (PGN). Plays a role in the regulation of MF axon pathway choice. Promotes MF migration towards ipsilaterally-located cerebellar territories. May have a role in shear flow mechanotransduction in osteocytes. Retains nuclear GLI1 and GLI3 in the cytoplasm. Binds to the minimal GLI-consensus sequence 5'-TGGGTGGTC-3'. The sequence is that of Zinc finger protein ZIC 1 (ZIC1) from Homo sapiens (Human).